The chain runs to 745 residues: Elongation factor G, mitochondrial (745 aa).

One can recognise a tr-type G domain in the interval 40-317 (EKIRNIGISA…AVLDYLPNPG (278 aa)). GTP-binding positions include 49-56 (AHIDSGKT), 116-120 (DTPGH), and 170-173 (NKLD).

The protein belongs to the TRAFAC class translation factor GTPase superfamily. Classic translation factor GTPase family. EF-G/EF-2 subfamily.

It is found in the mitochondrion. It participates in protein biosynthesis; polypeptide chain elongation. In terms of biological role, mitochondrial GTPase that catalyzes the GTP-dependent ribosomal translocation step during translation elongation. During this step, the ribosome changes from the pre-translocational (PRE) to the post-translocational (POST) state as the newly formed A-site-bound peptidyl-tRNA and P-site-bound deacylated tRNA move to the P and E sites, respectively. Catalyzes the coordinated movement of the two tRNA molecules, the mRNA and conformational changes in the ribosome. Essential during development as it acts as a retrograde signal from mitochondria to the nucleus to slow down cell proliferation if mitochondrial energy output is low. This is Elongation factor G, mitochondrial from Drosophila willistoni (Fruit fly).